The primary structure comprises 271 residues: 3-methyl-2-oxobutanoate hydroxymethyltransferase (271 aa).

Mg(2+) is bound by residues aspartate 51 and aspartate 90. Residues 51 to 52, aspartate 90, and lysine 119 each bind 3-methyl-2-oxobutanoate; that span reads DS. Glutamate 121 is a Mg(2+) binding site. Catalysis depends on glutamate 188, which acts as the Proton acceptor.

It belongs to the PanB family. In terms of assembly, homodecamer; pentamer of dimers. The cofactor is Mg(2+).

The protein resides in the cytoplasm. It carries out the reaction 3-methyl-2-oxobutanoate + (6R)-5,10-methylene-5,6,7,8-tetrahydrofolate + H2O = 2-dehydropantoate + (6S)-5,6,7,8-tetrahydrofolate. Its pathway is cofactor biosynthesis; (R)-pantothenate biosynthesis; (R)-pantoate from 3-methyl-2-oxobutanoate: step 1/2. Catalyzes the reversible reaction in which hydroxymethyl group from 5,10-methylenetetrahydrofolate is transferred onto alpha-ketoisovalerate to form ketopantoate. The sequence is that of 3-methyl-2-oxobutanoate hydroxymethyltransferase from Aromatoleum aromaticum (strain DSM 19018 / LMG 30748 / EbN1) (Azoarcus sp. (strain EbN1)).